A 317-amino-acid chain; its full sequence is Porphobilinogen deaminase (317 aa).

Cys-245 is subject to S-(dipyrrolylmethanemethyl)cysteine.

Belongs to the HMBS family. As to quaternary structure, monomer. It depends on dipyrromethane as a cofactor.

The catalysed reaction is 4 porphobilinogen + H2O = hydroxymethylbilane + 4 NH4(+). The protein operates within porphyrin-containing compound metabolism; protoporphyrin-IX biosynthesis; coproporphyrinogen-III from 5-aminolevulinate: step 2/4. It functions in the pathway porphyrin-containing compound metabolism; chlorophyll biosynthesis. Tetrapolymerization of the monopyrrole PBG into the hydroxymethylbilane pre-uroporphyrinogen in several discrete steps. The protein is Porphobilinogen deaminase of Synechococcus sp. (strain CC9902).